A 71-amino-acid chain; its full sequence is Translation initiation factor IF-1 (71 aa).

Positions 1–71 (MSKDDLIQFT…LTKGRVIHRH (71 aa)) constitute an S1-like domain.

This sequence belongs to the IF-1 family. Component of the 30S ribosomal translation pre-initiation complex which assembles on the 30S ribosome in the order IF-2 and IF-3, IF-1 and N-formylmethionyl-tRNA(fMet); mRNA recruitment can occur at any time during PIC assembly.

Its subcellular location is the cytoplasm. Its function is as follows. One of the essential components for the initiation of protein synthesis. Stabilizes the binding of IF-2 and IF-3 on the 30S subunit to which N-formylmethionyl-tRNA(fMet) subsequently binds. Helps modulate mRNA selection, yielding the 30S pre-initiation complex (PIC). Upon addition of the 50S ribosomal subunit IF-1, IF-2 and IF-3 are released leaving the mature 70S translation initiation complex. The protein is Translation initiation factor IF-1 of Rickettsia prowazekii (strain Madrid E).